Here is a 457-residue protein sequence, read N- to C-terminus: Transcription factor E2F3 (457 aa).

Positions leucine 80–tyrosine 171 are disordered. Residues serine 93–serine 102 show a composition bias toward polar residues. The segment at threonine 96 to proline 145 is cyclin A/CDK2 binding. Residues glycine 147–serine 237 mediate DNA binding. Low complexity predominate over residues serine 155–serine 164. The tract at residues leucine 196 to leucine 217 is leucine-zipper. Positions glutamate 201–serine 237 match the DEF box motif. The segment at leucine 238–isoleucine 329 is dimerization. The interval histidine 350–alanine 387 is disordered. Residues aspartate 371–alanine 387 show a composition bias toward polar residues. Residues serine 383–serine 457 are transactivation. A retinoblastoma protein binding region spans residues glutamate 424–aspartate 441.

It belongs to the E2F/DP family. In terms of assembly, component of the DRTF1/E2F transcription factor complex. Binds cooperatively with TFDP1/Dp-1 to E2F sites. Interacts with retinoblastoma protein RB1 and related proteins (such as RBL1) that inhibit the E2F transactivation domain. Binds EAPP.

It localises to the nucleus. In terms of biological role, transcription activator that binds DNA cooperatively with DP proteins through the E2 recognition site, 5'-TTTC[CG]CGC-3' found in the promoter region of a number of genes whose products are involved in cell cycle regulation or in DNA replication. The DRTF1/E2F complex functions in the control of cell-cycle progression from G1 to S phase. E2F3 binds specifically to RB1 in a cell-cycle dependent manner. Inhibits adipogenesis, probably through the repression of CEBPA binding to its target gene promoters. The polypeptide is Transcription factor E2F3 (E2f3) (Mus musculus (Mouse)).